The sequence spans 637 residues: Dihydrolipoyllysine-residue acetyltransferase component of pyruvate dehydrogenase complex, mitochondrial (637 aa).

The transit peptide at 1–85 directs the protein to the mitochondrion; that stretch reads MWRVCVRRAQ…LLGSPGRRSY (85 aa). Residues 80-100 are disordered; it reads PGRRSYSLPPHQKVPLPSLSP. In terms of domain architecture, Lipoyl-binding 1 spans 90-166; it reads HQKVPLPSLS…PIGSIICITV (77 aa). Serine 99 bears the Phosphoserine mark. At lysine 131 the chain carries N6-lipoyllysine. Disordered regions lie at residues 189 to 219 and 307 to 340; these read QAAAPTPAPAPCAAPTAPSAKAPGSSYPPHM and LKPQAPPPVPPPVAAAPPTAQPLAPTPSGLPAGP. Low complexity predominate over residues 201-211; sequence AAPTAPSAKAP. The Lipoyl-binding 2 domain occupies 218–287; that stretch reads HMQVSAVGEQ…PLGAPLCIIV (70 aa). The span at 310–321 shows a compositional bias: pro residues; that stretch reads QAPPPVPPPVAA. Positions 322–333 are enriched in low complexity; it reads APPTAQPLAPTP. Residues 345–382 enclose the Peripheral subunit-binding (PSBD) domain; it reads FVSPLAKKLAAERGIDLTQVKGTGPEGRIIKKDIDSFV. Arginine 451 contacts CoA. Lysine 456 is subject to N6-acetyllysine. Lysine 463 is subject to N6-succinyllysine. Residue serine 465 coordinates CoA. At lysine 537 the chain carries N6-succinyllysine. Serine 556, asparagine 557, and glycine 581 together coordinate CoA. Catalysis depends on residues histidine 610 and aspartate 614.

The protein belongs to the 2-oxoacid dehydrogenase family. As to quaternary structure, part of the pyruvate dehydrogenase complex (PDHc) that is a multi-enzyme complex composed of multiple copies of three enzymes, pyruvate dehydrogenase (subunits PDH1A and PDHB, E1 component), dihydrolipoamide acetyltransferase (DLAT, E2 component), and dihydrolipoamide dehydrogenase (DLD, E3 component) to which is added an additional protein the E3-binding protein (PDHX, E3BP). In terms of structural architecture, the E2 and E3BP components assemble into a 60meric central core with icosahedral symmetry. The central core is decorated with E1 and E3 proteins. Currently, two alternative models for the E2:E3BP stoichiometry are considered as being either 48:12 (E2(48)-E3BP(12)) or 40:20 (E2(40)-E3BP(20)). Interacts with PDK2 and PDK3. Interacts with SIRT4. Interacts with PDHB. The cofactor is (R)-lipoate. Delipoylated at Lys-131 by SIRT4, delipoylation decreases the PHD complex activity. Detected at higher levels in cauda epididymal spermatazoa than in caput epididymal spermatazoa (at protein level).

The protein resides in the mitochondrion matrix. It carries out the reaction N(6)-[(R)-dihydrolipoyl]-L-lysyl-[protein] + acetyl-CoA = N(6)-[(R)-S(8)-acetyldihydrolipoyl]-L-lysyl-[protein] + CoA. As part of the pyruvate dehydrogenase complex, catalyzes the transfers of an acetyl group to a lipoic acid moiety. The pyruvate dehydrogenase complex, catalyzes the overall conversion of pyruvate to acetyl-CoA and CO(2), and thereby links cytoplasmic glycolysis and the mitochondrial tricarboxylic acid (TCA) cycle. This is Dihydrolipoyllysine-residue acetyltransferase component of pyruvate dehydrogenase complex, mitochondrial from Mesocricetus auratus (Golden hamster).